Consider the following 445-residue polypeptide: MGSQELQRKLGFWAVLAIAVGTTVGSGIFVSVGEVAKAAGTPWLTVLAFVIGGLIVIPQMCVYAELSTAYPENGADYVYLKNAGSRPLAFLSGWASFWANDAPSLSIMALAIVSNLGFLTPIDPLLGKFIAAGLIIAFMLLHLRSVEGGAAFQTLITIAKIIPFTIVIGLGIFWFKAENFAAPATTAIGATGSFMALLAGISATSWSYTGMASICYMTGEIKNPGKTMPRALIGSCLLVLVLYTLLALVISGLMPFDKLANSETPISDALTWIPALGSTAGIFVAITAMIVILGSLSSCVMYQPRLEYAMAKDNLFFKCFGHVHPKYNTPDVSIILQGALGIFFIFVSDLTSLLGYFTLVMCFKNTLTFGSIIWCRKRDDYKPLWRTPAFGLMTPLAIASSLILVASTFVWAPIPGLICAVIVIATGLPAYAFWAKRSRQLNALS.

11 helical membrane-spanning segments follow: residues 10–32 (LGFWAVLAIAVGTTVGSGIFVSV), 39–61 (AGTPWLTVLAFVIGGLIVIPQMC), 97–119 (FWANDAPSLSIMALAIVSNLGFL), 126–143 (LGKFIAAGLIIAFMLLHL), 153–175 (QTLITIAKIIPFTIVIGLGIFWF), 188–210 (IGATGSFMALLAGISATSWSYTG), 230–252 (RALIGSCLLVLVLYTLLALVISG), 272–294 (WIPALGSTAGIFVAITAMIVILG), 341–363 (GIFFIFVSDLTSLLGYFTLVMCF), 384–406 (LWRTPAFGLMTPLAIASSLILVA), and 411–433 (WAPIPGLICAVIVIATGLPAYAF).

It belongs to the amino acid-polyamine-organocation (APC) superfamily.

It is found in the cell inner membrane. It carries out the reaction N(6)-(D-fructosyl)-L-lysine(in) = N(6)-(D-fructosyl)-L-lysine(out). The enzyme catalyses N(6)-(D-psicosyl)-L-lysine(in) = N(6)-(D-psicosyl)-L-lysine(out). It functions in the pathway carbohydrate metabolism; fructoselysine degradation. Its function is as follows. Is likely involved in the transport of fructoselysine and psicoselysine to the cytoplasm, where they are degraded. The sequence is that of Probable fructoselysine/psicoselysine transporter FrlA (frlA) from Escherichia coli O157:H7.